Reading from the N-terminus, the 495-residue chain is MTAITDLGLAGLRDGFRAGDFSAREIADAFNGAVAGAKALNAFIIETPDHATAAAEAADRARAAGELLPLSGVPLGIKDLFCTAGHQTTAASHMLGGFTPTYESTVTGKLFAAGAGMLGKLNLDQFAMGSSNETSAYGNVVSPWRRNDGGNAPLAPGGSSGGSSSAIAARIVPAATGTDTGGSIRQPAAFTGIAGIKPTYGRCSRFGIVAFASSLDQAGAMAQDVRDSAILLEAMSGFDPKDSTSLDVAVPKWEANLSSDLKGKKVGIPKEYRVDNMPAEIDALWRQGIEWLRDAGAEIVDVSLPHTRYALPTYYIIAPAEASSNLARYDGVRYGLRDLPEGANLQEMYAATRAAGFGPEVKRRILIGTYVLSAGYYDAYYTKAQKVRALIARDFEEAFRQVDVLLTPTAPSAAFALGEKSADPLEMYLNDVFTVPASLAGVPAMSVPAGLDGQGLPLGLQIIGRPLDEQGVLNAGLAIEQRAGFTAKPQNWWAK.

Active-site charge relay system residues include Lys-78 and Ser-159. Catalysis depends on Ser-183, which acts as the Acyl-ester intermediate.

This sequence belongs to the amidase family. GatA subfamily. As to quaternary structure, heterotrimer of A, B and C subunits.

The enzyme catalyses L-glutamyl-tRNA(Gln) + L-glutamine + ATP + H2O = L-glutaminyl-tRNA(Gln) + L-glutamate + ADP + phosphate + H(+). Allows the formation of correctly charged Gln-tRNA(Gln) through the transamidation of misacylated Glu-tRNA(Gln) in organisms which lack glutaminyl-tRNA synthetase. The reaction takes place in the presence of glutamine and ATP through an activated gamma-phospho-Glu-tRNA(Gln). The sequence is that of Glutamyl-tRNA(Gln) amidotransferase subunit A from Rhizorhabdus wittichii (strain DSM 6014 / CCUG 31198 / JCM 15750 / NBRC 105917 / EY 4224 / RW1) (Sphingomonas wittichii).